Reading from the N-terminus, the 378-residue chain is Putative F-box/kelch-repeat protein At3g43710 (378 aa).

An F-box domain is found at 23–69; sequence TFGIEMLPDDLVLSCLARVPRMYYPILSLVSKRFRSFLTSTELYQTR. Kelch repeat units lie at residues 130–176, 178–227, and 262–308; these read NIYV…VLDG, IYVA…GYDG, and SQCV…VPTK.

This chain is Putative F-box/kelch-repeat protein At3g43710, found in Arabidopsis thaliana (Mouse-ear cress).